A 272-amino-acid chain; its full sequence is Ethanolamine ammonia-lyase small subunit (272 aa).

Residues valine 161, glutamate 182, and cysteine 211 each coordinate adenosylcob(III)alamin.

The protein belongs to the EutC family. As to quaternary structure, the basic unit is a heterodimer which dimerizes to form tetramers. The heterotetramers trimerize; 6 large subunits form a core ring with 6 small subunits projecting outwards. The cofactor is adenosylcob(III)alamin.

It is found in the bacterial microcompartment. It carries out the reaction ethanolamine = acetaldehyde + NH4(+). It participates in amine and polyamine degradation; ethanolamine degradation. Catalyzes the deamination of various vicinal amino-alcohols to oxo compounds. Allows this organism to utilize ethanolamine as the sole source of nitrogen and carbon in the presence of external vitamin B12. This chain is Ethanolamine ammonia-lyase small subunit, found in Pseudomonas putida (strain W619).